A 108-amino-acid chain; its full sequence is MADPRVRQIKIKTGVVKRLVKEKMMYEKEAKQQEEKIEKMKAEDGENYAIKKQAEILQESRMMIPDCQRRLEAAHTDLLQLLESEKDLEEAEEYKEARLVLDSVKLEA.

Position 2 is an N-acetylalanine (alanine 2).

This sequence belongs to the TBCA family. In terms of assembly, supercomplex made of cofactors A to E. Cofactors A and D function by capturing and stabilizing tubulin in a quasi-native conformation. Cofactor E binds to the cofactor D-tubulin complex; interaction with cofactor C then causes the release of tubulin polypeptides that are committed to the native state. As to expression, widely expressed, but is most abundant in the testis.

Its subcellular location is the cytoplasm. It is found in the cytoskeleton. Functionally, tubulin-folding protein; involved in the early step of the tubulin folding pathway. The polypeptide is Tubulin-specific chaperone A (TBCA) (Bos taurus (Bovine)).